Consider the following 405-residue polypeptide: Amino sugar nitrososynthase DnmZ (405 aa).

DTDP is bound by residues E117 and R332.

This sequence belongs to the acyl-CoA dehydrogenase family. Homotetramer. The cofactor is FAD.

The protein operates within antibiotic biosynthesis. Nitrososynthase involved in the biosynthesis of baumycin. Catalyzes the double-oxidation of TDP-L-epi-vancosamine to TDP-L-epi-vancosonitrose. The rapid turnover of TDP-L-epi-vancosamine suggests that this compound, or a closely related analog, is the natural substrate for DnmZ. Can also catalyze the double-oxidation of TDP-L-evernosamine to TDP-L-evernitrosose. This is Amino sugar nitrososynthase DnmZ from Streptomyces peucetius.